A 131-amino-acid chain; its full sequence is Profilin (131 aa).

Belongs to the profilin family. As to quaternary structure, occurs in many kinds of cells as a complex with monomeric actin in a 1:1 ratio.

The protein localises to the cytoplasm. It is found in the cytoskeleton. Functionally, binds to actin and affects the structure of the cytoskeleton. At high concentrations, profilin prevents the polymerization of actin, whereas it enhances it at low concentrations. By binding to PIP2, it inhibits the formation of IP3 and DG. This Prunus persica (Peach) protein is Profilin.